The sequence spans 201 residues: MELVLKDAQSALEVSETTFGRDFNEALVHQVVVAYAANARQGTRAQKTRAEVTGSGKKPWRQKGTGRARAGTVKGPIWRGGGVSFAAKTQDHSQKVNKKMYRGALKSILSELVRQDRLVVVESFGVEAPKTKELKAKLKDMKLEDVLIVTPEIDENLFLAARNLYKVDVRDVAGIDPVSLIAFEKVLVTADAVKQIEEMLG.

The interval 45–71 (AQKTRAEVTGSGKKPWRQKGTGRARAG) is disordered.

It belongs to the universal ribosomal protein uL4 family. As to quaternary structure, part of the 50S ribosomal subunit.

Functionally, one of the primary rRNA binding proteins, this protein initially binds near the 5'-end of the 23S rRNA. It is important during the early stages of 50S assembly. It makes multiple contacts with different domains of the 23S rRNA in the assembled 50S subunit and ribosome. In terms of biological role, forms part of the polypeptide exit tunnel. In Shewanella loihica (strain ATCC BAA-1088 / PV-4), this protein is Large ribosomal subunit protein uL4.